The sequence spans 64 residues: Large ribosomal subunit protein bL28 (64 aa).

A disordered region spans residues 1–23 (MARKDQISHRGPLSGNNRSHALN).

This sequence belongs to the bacterial ribosomal protein bL28 family.

This chain is Large ribosomal subunit protein bL28, found in Mesomycoplasma hyopneumoniae (strain J / ATCC 25934 / NCTC 10110) (Mycoplasma hyopneumoniae).